The sequence spans 101 residues: Nucleoid-associated protein Bind_0255 (101 aa).

The protein belongs to the YbaB/EbfC family. As to quaternary structure, homodimer.

It is found in the cytoplasm. The protein resides in the nucleoid. Its function is as follows. Binds to DNA and alters its conformation. May be involved in regulation of gene expression, nucleoid organization and DNA protection. The sequence is that of Nucleoid-associated protein Bind_0255 from Beijerinckia indica subsp. indica (strain ATCC 9039 / DSM 1715 / NCIMB 8712).